The following is a 45-amino-acid chain: Cytochrome b559 subunit beta (45 aa).

Residues 20-36 (WLAVHTLAVPTVFFLGA) form a helical membrane-spanning segment. Residue H24 participates in heme binding.

The protein belongs to the PsbE/PsbF family. In terms of assembly, heterodimer of an alpha subunit and a beta subunit. PSII is composed of 1 copy each of membrane proteins PsbA, PsbB, PsbC, PsbD, PsbE, PsbF, PsbH, PsbI, PsbJ, PsbK, PsbL, PsbM, PsbT, PsbX, PsbY, PsbZ, Psb30/Ycf12, peripheral proteins PsbO, CyanoQ (PsbQ), PsbU, PsbV and a large number of cofactors. It forms dimeric complexes. Heme b is required as a cofactor.

The protein resides in the cellular thylakoid membrane. This b-type cytochrome is tightly associated with the reaction center of photosystem II (PSII). PSII is a light-driven water:plastoquinone oxidoreductase that uses light energy to abstract electrons from H(2)O, generating O(2) and a proton gradient subsequently used for ATP formation. It consists of a core antenna complex that captures photons, and an electron transfer chain that converts photonic excitation into a charge separation. This is Cytochrome b559 subunit beta from Trichormus variabilis (strain ATCC 29413 / PCC 7937) (Anabaena variabilis).